A 415-amino-acid polypeptide reads, in one-letter code: Lipoyl synthase, apicoplast (415 aa).

The signal sequence occupies residues 1-23; the sequence is MHFGIPSLFYLYILFSIIMRIKC. 7 residues coordinate [4Fe-4S] cluster: cysteine 153, cysteine 158, cysteine 164, cysteine 179, cysteine 183, cysteine 186, and serine 394. A Radical SAM core domain is found at 165-383; the sequence is WNIGTATIML…KEEGLKMGFK (219 aa).

It belongs to the radical SAM superfamily. Lipoyl synthase family. The cofactor is [4Fe-4S] cluster.

The protein localises to the plastid. Its subcellular location is the apicoplast. The enzyme catalyses [[Fe-S] cluster scaffold protein carrying a second [4Fe-4S](2+) cluster] + N(6)-octanoyl-L-lysyl-[protein] + 2 oxidized [2Fe-2S]-[ferredoxin] + 2 S-adenosyl-L-methionine + 4 H(+) = [[Fe-S] cluster scaffold protein] + N(6)-[(R)-dihydrolipoyl]-L-lysyl-[protein] + 4 Fe(3+) + 2 hydrogen sulfide + 2 5'-deoxyadenosine + 2 L-methionine + 2 reduced [2Fe-2S]-[ferredoxin]. It functions in the pathway protein modification; protein lipoylation via endogenous pathway; protein N(6)-(lipoyl)lysine from octanoyl-[acyl-carrier-protein]: step 2/2. Catalyzes the radical-mediated insertion of two sulfur atoms into the C-6 and C-8 positions of the octanoyl moiety bound to the lipoyl domains of lipoate-dependent enzymes, thereby converting the octanoylated domains into lipoylated derivatives. This chain is Lipoyl synthase, apicoplast, found in Plasmodium falciparum (isolate 3D7).